Reading from the N-terminus, the 234-residue chain is Phosphoribosylaminoimidazole-succinocarboxamide synthase (234 aa).

Belongs to the SAICAR synthetase family.

It catalyses the reaction 5-amino-1-(5-phospho-D-ribosyl)imidazole-4-carboxylate + L-aspartate + ATP = (2S)-2-[5-amino-1-(5-phospho-beta-D-ribosyl)imidazole-4-carboxamido]succinate + ADP + phosphate + 2 H(+). It participates in purine metabolism; IMP biosynthesis via de novo pathway; 5-amino-1-(5-phospho-D-ribosyl)imidazole-4-carboxamide from 5-amino-1-(5-phospho-D-ribosyl)imidazole-4-carboxylate: step 1/2. The polypeptide is Phosphoribosylaminoimidazole-succinocarboxamide synthase (Clostridium botulinum (strain Langeland / NCTC 10281 / Type F)).